We begin with the raw amino-acid sequence, 461 residues long: Proton extrusion protein PxcA (461 aa).

4 helical membrane-spanning segments follow: residues 244–264 (FMLL…ALIV), 339–359 (LKNI…VFTG), 386–406 (IILF…EVLV), and 421–441 (FINM…KYWI).

It belongs to the CemA family.

It is found in the cell inner membrane. Functionally, required for H(+) efflux immediately after light irradiation to form a rapid H(+) concentration gradient across the thylakoid membranes. Together with PxcL, contributes to transient H(+) uptake following dark to light transition. The protein is Proton extrusion protein PxcA of Thermosynechococcus vestitus (strain NIES-2133 / IAM M-273 / BP-1).